The chain runs to 961 residues: Translation initiation factor IF-2 (961 aa).

Residues 146–158 (PSVPNKTLTTTPH) show a composition bias toward polar residues. Positions 146–373 (PSVPNKTLTT…KTTSQVTTQP (228 aa)) are disordered. Residues 163-176 (NHSEKDVLESHDSS) show a composition bias toward basic and acidic residues. Low complexity predominate over residues 177–187 (NKNIKQSSSQN). The span at 230–239 (SEEKNVDIQQ) shows a compositional bias: basic and acidic residues. Composition is skewed to polar residues over residues 241–285 (EIPS…TAPH) and 301–310 (YQGQNRNNFI). Over residues 355 to 364 (NRGRKRHKQK) the composition is skewed to basic residues. One can recognise a tr-type G domain in the interval 460–627 (RRPPVVTIMG…LLALQTDILE (168 aa)). The segment at 469–476 (GHVDHGKT) is G1. 469 to 476 (GHVDHGKT) is a binding site for GTP. The segment at 494-498 (GITQH) is G2. Residues 515 to 518 (DTPG) form a G3 region. GTP contacts are provided by residues 515–519 (DTPGH) and 569–572 (NKMD). A G4 region spans residues 569–572 (NKMD). Residues 605–607 (SAK) form a G5 region.

This sequence belongs to the TRAFAC class translation factor GTPase superfamily. Classic translation factor GTPase family. IF-2 subfamily.

It localises to the cytoplasm. Its function is as follows. One of the essential components for the initiation of protein synthesis. Protects formylmethionyl-tRNA from spontaneous hydrolysis and promotes its binding to the 30S ribosomal subunits. Also involved in the hydrolysis of GTP during the formation of the 70S ribosomal complex. The protein is Translation initiation factor IF-2 of Lawsonia intracellularis (strain PHE/MN1-00).